Here is a 148-residue protein sequence, read N- to C-terminus: Small ribosomal subunit protein eS19 (148 aa).

The protein belongs to the eukaryotic ribosomal protein eS19 family.

The protein is Small ribosomal subunit protein eS19 (rps19) of Dictyostelium discoideum (Social amoeba).